We begin with the raw amino-acid sequence, 107 residues long: UPF0060 membrane protein glr4174 (107 aa).

4 consecutive transmembrane segments (helical) span residues 1-21, 26-46, 58-78, and 87-107; these read MALLLFGLAAAAEIGGCFAFW, LGKNPLWLAPGLVSLVVFAWL, AYAAYGGVYIAASLVWLWLVE, and LAGALLCLAGAAVILFADRSP.

This sequence belongs to the UPF0060 family.

The protein localises to the cell inner membrane. The protein is UPF0060 membrane protein glr4174 of Gloeobacter violaceus (strain ATCC 29082 / PCC 7421).